We begin with the raw amino-acid sequence, 302 residues long: Large ribosomal subunit protein uL4m (302 aa).

Belongs to the universal ribosomal protein uL4 family. Component of the mitochondrial ribosome large subunit (39S) which comprises a 16S rRNA and about 50 distinct proteins.

It is found in the mitochondrion. The sequence is that of Large ribosomal subunit protein uL4m (mrpl4) from Danio rerio (Zebrafish).